Here is a 1338-residue protein sequence, read N- to C-terminus: P-type sodium-transporting ATPase4 (1338 aa).

Positions M1–H106 are disordered. Over residues A55–R69 the composition is skewed to basic and acidic residues. The span at G91 to Q104 shows a compositional bias: polar residues. Transmembrane regions (helical) follow at residues I229 to S249, W255 to M275, L418 to I438, I456 to V476, F985 to A1005, I1068 to V1088, M1261 to I1281, and C1288 to L1308.

Belongs to the cation transport ATPase (P-type) (TC 3.A.3) family.

The protein resides in the cell membrane. The catalysed reaction is Na(+)(in) + ATP + H2O = Na(+)(out) + ADP + phosphate + H(+). With respect to regulation, inhibited by cipargamin, a synthetic spiroindolone. Inhibited by pyrazoleamide PA21A050, structurally unrelated to the spiroindolones. Inhibited by (+)-SJ733, a dihydroisoquinolone compound. In terms of biological role, sodium-exporting ATPase. Required for the extrusion of Na(+) from the parasites to maintain a low cytosolic concentration of Na(+). Required for maintaining the viability of extracellular parasites but not for intracellular growth, egress or invasion. Involved in parasite virulence. This is P-type sodium-transporting ATPase4 from Toxoplasma gondii (strain ATCC 50861 / VEG).